Here is a 278-residue protein sequence, read N- to C-terminus: Phosphatidylglycerol--prolipoprotein diacylglyceryl transferase (278 aa).

A run of 4 helical transmembrane segments spans residues 12–32 (FGPLTLRWYGLLIAMAVLIGL), 44–64 (LENGLISDLLPLLVLFSVIGA), 86–106 (IWEGGIAIHGALIAGTLTLIL), and 113–133 (QPFLDVLDVLAPSVALGQAIG). R134 contributes to the a 1,2-diacyl-sn-glycero-3-phospho-(1'-sn-glycerol) binding site. 3 consecutive transmembrane segments (helical) span residues 173-193 (PTFLYESIWNLLLFVLLLVLF), 203-223 (FPAGTLSCVYLIGYSLGRIWI), and 246-266 (IAQLMSAMLMVLGGLGLWWLK).

This sequence belongs to the Lgt family.

Its subcellular location is the cell inner membrane. The catalysed reaction is L-cysteinyl-[prolipoprotein] + a 1,2-diacyl-sn-glycero-3-phospho-(1'-sn-glycerol) = an S-1,2-diacyl-sn-glyceryl-L-cysteinyl-[prolipoprotein] + sn-glycerol 1-phosphate + H(+). It functions in the pathway protein modification; lipoprotein biosynthesis (diacylglyceryl transfer). Catalyzes the transfer of the diacylglyceryl group from phosphatidylglycerol to the sulfhydryl group of the N-terminal cysteine of a prolipoprotein, the first step in the formation of mature lipoproteins. The protein is Phosphatidylglycerol--prolipoprotein diacylglyceryl transferase of Parasynechococcus marenigrum (strain WH8102).